The sequence spans 29 residues: Orphan peptide CllNtx (29 aa).

Post-translationally, contains 3 disulfide bonds. In terms of tissue distribution, expressed by the venom gland.

The protein localises to the secreted. In terms of biological role, may act as a toxin. The chain is Orphan peptide CllNtx from Centruroides limpidus (Mexican scorpion).